We begin with the raw amino-acid sequence, 448 residues long: Charged multivesicular body protein 7 (448 aa).

Residues 1–12 (MCSPGRAPPGPA) are compositionally biased toward pro residues. Residues 1–20 (MCSPGRAPPGPAPAGDLPPE) form a disordered region. A coiled-coil region spans residues 241–392 (QLMQSEQLLS…DSLLQDSAKE (152 aa)).

Belongs to the SNF7 family.

The protein resides in the cytoplasm. It localises to the nucleus envelope. Its function is as follows. ESCRT-III-like protein required to recruit the ESCRT-III complex to the nuclear envelope (NE) during late anaphase. Together with SPAST, the ESCRT-III complex promotes NE sealing and mitotic spindle disassembly during late anaphase. Recruited to the reforming NE during anaphase by LEMD2. Plays a role in the endosomal sorting pathway. This is Charged multivesicular body protein 7 (CHMP7) from Gallus gallus (Chicken).